Reading from the N-terminus, the 588-residue chain is Outer membrane transporter CdiB (588 aa).

A helical transmembrane segment spans residues 33-55 (VVRYFSLLPCLCILSFSSPAAML). The 76-residue stretch at 104–179 (FTVSRIVVSG…GVLHITVMEG (76 aa)) folds into the POTRA domain.

Belongs to the TPS (TC 1.B.20) family.

The protein localises to the cell outer membrane. In terms of biological role, potential outer membrane protein component of a toxin-immunity protein module, which functions as a cellular contact-dependent growth inhibition (CDI) system. CDI modules allow bacteria to communicate with and inhibit the growth of closely related neighboring bacteria in a contact-dependent fashion. This protein may be required for secretion and assembly of the CdiA toxin protein. Functionally, probable member of a two partner secretion pathway (TPS) in which it mediates the secretion of CdiA. This is Outer membrane transporter CdiB from Escherichia coli O6:K15:H31 (strain 536 / UPEC).